Consider the following 854-residue polypeptide: MSSGANITYASRKRRKPVQKTVKPIPAEGIKSNPSKRHRDRLNTELDRLASLLPFPQDVINKLDKLSVLRLSVSYLRAKSFFDVALKSTPADRNGGQDQCRAQIRDWQNLQEGEFLLQALNGFVLVVTADALVFYASSTIQDYLGFQQSDVIHQSVYELIHTEDRAEFQRQLHWALNPSQCTDSAQGVDEAHGPPQAAVYYTPDQLPPENASFMERCFRCRLRCLLDNSSGFLAMNFQGRLKYLHGQNKKGKDGALLPPQLALFAIATPLQPPSILEIRTKNFIFRTKHKLDFTPIGCDAKGQLILGYTEVELCTRGSGYQFIHAADMLHCAESHIRMIKTGESGMTVFRLLAKHSRWRWVQSNARLIYRNGRPDYIIATQRPLTDEEGREHLQKRSMSLPFMFATGEAVLYEISSPFSPIMDPLPIRTKSNTSRKDWAPQSTPSKDSFHPSSLMSALIQQDESIYLCPPSSPAPLDSHFLMGSVSKCGSWQDSFAATGSEAALKHEQIGHAQDVNLALSGGPSELFPDNKNNDLYSIMRDLGIDFEDIRSMQNEEFFRTDSTAAAAGEVDFKDIDITDEILTYVQDSLNNSTLLNSACQQQPVTQHLSCMLQERLQLEQQQQLQQPPPQALEPQQQLCQMVCPQQDLGPKHTQINGTFASWNPTPPVSFNCPQQELKHYQIFSSLQGTAQEFPYKPEVDSVPYTQNFAPCNQPLLPEHSKSVQLDFPGRDFEPSLHPTTSNLDFVSCLQVPENQSHGINSQSAMVSPQAYYAGAMSMYQCQPGPQRTPVDQTQYGSEIPGSQAFLSKVQSRGVFNETYSSDLSSIGHAAQTTGHLHHLAEARPLPDITPGGFL.

Positions methionine 1 to tyrosine 9 are excised as a propeptide. Positions methionine 1–histidine 38 are disordered. 2 consecutive short sequence motifs (nuclear localization signal) follow at residues arginine 12–arginine 15 and lysine 36–arginine 41. The region spanning proline 26–lysine 79 is the bHLH domain. Residues arginine 37–lysine 65 are DNA-binding. 3 required for maintaining the overall integrity of the AHR:ARNT heterodimer and its transcriptional activity regions span residues leucine 49–phenylalanine 81, leucine 116–valine 124, and phenylalanine 264–isoleucine 266. Positions leucine 63–leucine 71 match the Nuclear export signal motif. One can recognise a PAS 1 domain in the interval glutamine 111 to alanine 175. Residues leucine 270–lysine 340 enclose the PAS 2 domain. Residues methionine 346–glutamate 387 enclose the PAC domain. The tract at residues leucine 425–serine 452 is disordered. Residues proline 440–serine 452 show a composition bias toward polar residues.

Homodimer. Heterodimer; efficient DNA binding requires dimerization with another bHLH protein. Interacts with ARNT; the heterodimer ARNT:AHR binds to core DNA sequence 5'-TGCGTG-3' within the dioxin response element (DRE) of target gene promoters and activates their transcription. Binds MYBBP1A. Interacts with coactivators including SRC-1, RIP140 and NOCA7, and with the corepressor SMRT. Interacts with NEDD8 and IVNS1ABP. Interacts with BMAL1. Interacts with HSP90AB1. Interacts with TIPARP; leading to mono-ADP-ribosylation of AHR and subsequent inhibition of AHR. In terms of processing, mono-ADP-ribosylated, leading to inhibit transcription activator activity of AHR.

The protein resides in the cytoplasm. It is found in the nucleus. Ligand-activated transcription factor that enables cells to adapt to changing conditions by sensing compounds from the environment, diet, microbiome and cellular metabolism, and which plays important roles in development, immunity and cancer. Upon ligand binding, translocates into the nucleus, where it heterodimerizes with ARNT and induces transcription by binding to xenobiotic response elements (XRE). Regulates a variety of biological processes, including angiogenesis, hematopoiesis, drug and lipid metabolism, cell motility and immune modulation. Xenobiotics can act as ligands: upon xenobiotic-binding, activates the expression of multiple phase I and II xenobiotic chemical metabolizing enzyme genes (such as the CYP1A1 gene). Mediates biochemical and toxic effects of halogenated aromatic hydrocarbons. Next to xenobiotics, natural ligands derived from plants, microbiota, and endogenous metabolism are potent AHR agonists. Tryptophan (Trp) derivatives constitute an important class of endogenous AHR ligands. Acts as a negative regulator of anti-tumor immunity: indoles and kynurenic acid generated by Trp catabolism act as ligand and activate AHR, thereby promoting AHR-driven cancer cell motility and suppressing adaptive immunity. Regulates the circadian clock by inhibiting the basal and circadian expression of the core circadian component PER1. Inhibits PER1 by repressing the CLOCK-BMAL1 heterodimer mediated transcriptional activation of PER1. The heterodimer ARNT:AHR binds to core DNA sequence 5'-TGCGTG-3' within the dioxin response element (DRE) of target gene promoters and activates their transcription. In Mus spretus (Western Mediterranean mouse), this protein is Aryl hydrocarbon receptor (Ahr).